Here is a 429-residue protein sequence, read N- to C-terminus: Saccharopine dehydrogenase-like oxidoreductase (429 aa).

Residue Ala2 is modified to N-acetylalanine. Ser217 is modified (phosphoserine).

It belongs to the saccharopine dehydrogenase family.

The chain is Saccharopine dehydrogenase-like oxidoreductase (SCCPDH) from Pongo abelii (Sumatran orangutan).